The following is a 784-amino-acid chain: ATP-dependent 6-phosphofructokinase, platelet type (784 aa).

Position 1 is an N-acetylmethionine (methionine 1). An N-terminal catalytic PFK domain 1 region spans residues 1–398 (MSDLDSSSSS…NLNTYKRLAI (398 aa)). 3 positions are modified to phosphoserine: serine 2, serine 6, and serine 20. ATP-binding positions include glycine 33, 96–97 (RC), and 126–129 (GDGS). Aspartate 127 is a Mg(2+) binding site. Position 141 is a phosphoserine (serine 141). Residues 172–174 (SID), arginine 209, 216–218 (MGR), glutamate 272, arginine 300, and 306–309 (HVQR) contribute to the substrate site. Aspartate 174 serves as the catalytic Proton acceptor. Lysine 394 is subject to N6-acetyllysine. The tract at residues 399-410 (KLPDEKIVKSNC) is interdomain linker. The tract at residues 411-784 (NVAVINVGAP…LESLQHHEEL (374 aa)) is C-terminal regulatory PFK domain 2. Beta-D-fructose 2,6-bisphosphate is bound at residue arginine 480. Position 485 is an N6-acetyllysine (lysine 485). Beta-D-fructose 2,6-bisphosphate contacts are provided by residues 537–541 (TVSNN), arginine 575, 582–584 (MGG), and glutamate 638. The O-linked (GlcNAc) serine glycan is linked to serine 539. Residue tyrosine 650 is modified to Phosphotyrosine. Beta-D-fructose 2,6-bisphosphate contacts are provided by residues arginine 664 and 670–673 (HMQQ). Lysine 687 carries the post-translational modification N6-acetyllysine. Arginine 743 provides a ligand contact to beta-D-fructose 2,6-bisphosphate.

It belongs to the phosphofructokinase type A (PFKA) family. ATP-dependent PFK group I subfamily. Eukaryotic two domain clade 'E' sub-subfamily. Homo- and heterotetramers. Phosphofructokinase (PFK) enzyme functions as a tetramer composed of different combinations of 3 types of subunits, called PFKM (M), PFKL (L) and PFKP (P). The composition of the PFK tetramer differs according to the tissue type it is present in. The kinetic and regulatory properties of the tetrameric enzyme are dependent on the subunit composition, hence can vary across tissues. Interacts with ATG4B; promoting phosphorylation of ATG4B. Requires Mg(2+) as cofactor. GlcNAcylation decreases enzyme activity. Expression is constant during tumor growth and markedly decreases when cell proliferation stops.

It is found in the cytoplasm. The enzyme catalyses beta-D-fructose 6-phosphate + ATP = beta-D-fructose 1,6-bisphosphate + ADP + H(+). It participates in carbohydrate degradation; glycolysis; D-glyceraldehyde 3-phosphate and glycerone phosphate from D-glucose: step 3/4. With respect to regulation, allosterically activated by ADP, AMP, or fructose 2,6-bisphosphate, and allosterically inhibited by ATP or citrate. Its function is as follows. Catalyzes the phosphorylation of D-fructose 6-phosphate to fructose 1,6-bisphosphate by ATP, the first committing step of glycolysis. This chain is ATP-dependent 6-phosphofructokinase, platelet type (Pfkp), found in Mus musculus (Mouse).